A 99-amino-acid chain; its full sequence is Malonate decarboxylase acyl carrier protein (99 aa).

Serine 25 carries the O-(phosphoribosyl dephospho-coenzyme A)serine modification.

This sequence belongs to the MdcC family. In terms of processing, covalently binds the prosthetic group of malonate decarboxylase.

Its subcellular location is the cytoplasm. In terms of biological role, subunit of malonate decarboxylase, it is an acyl carrier protein to which acetyl and malonyl thioester residues are bound via a 2'-(5''-phosphoribosyl)-3'-dephospho-CoA prosthetic group and turn over during the catalytic mechanism. The chain is Malonate decarboxylase acyl carrier protein from Pseudomonas paraeruginosa (strain DSM 24068 / PA7) (Pseudomonas aeruginosa (strain PA7)).